The primary structure comprises 202 residues: Homeobox protein ceh-13 (202 aa).

2 disordered regions span residues Pro60–Gly83 and Arg166–Lys202. Low complexity predominate over residues Ala63 to Pro81. The homeobox DNA-binding region spans Asn114–Glu173. The span at Thr183–Ser194 shows a compositional bias: polar residues.

It localises to the nucleus. This chain is Homeobox protein ceh-13 (ceh-13), found in Caenorhabditis elegans.